The following is a 394-amino-acid chain: NAD(P)H-quinone oxidoreductase subunit H (394 aa).

It belongs to the complex I 49 kDa subunit family. In terms of assembly, NDH-1 can be composed of about 15 different subunits; different subcomplexes with different compositions have been identified which probably have different functions.

It is found in the cellular thylakoid membrane. The enzyme catalyses a plastoquinone + NADH + (n+1) H(+)(in) = a plastoquinol + NAD(+) + n H(+)(out). It carries out the reaction a plastoquinone + NADPH + (n+1) H(+)(in) = a plastoquinol + NADP(+) + n H(+)(out). Its function is as follows. NDH-1 shuttles electrons from an unknown electron donor, via FMN and iron-sulfur (Fe-S) centers, to quinones in the respiratory and/or the photosynthetic chain. The immediate electron acceptor for the enzyme in this species is believed to be plastoquinone. Couples the redox reaction to proton translocation, and thus conserves the redox energy in a proton gradient. Cyanobacterial NDH-1 also plays a role in inorganic carbon-concentration. In Prochlorococcus marinus (strain MIT 9303), this protein is NAD(P)H-quinone oxidoreductase subunit H.